The chain runs to 628 residues: DNA mismatch repair protein MutL (628 aa).

The disordered stretch occupies residues 335 to 411; that stretch reads SVDIEPESEQ…ASRNSEVSLP (77 aa). Polar residues predominate over residues 343–353; sequence EQTTAWQTSPT.

The protein belongs to the DNA mismatch repair MutL/HexB family.

This protein is involved in the repair of mismatches in DNA. It is required for dam-dependent methyl-directed DNA mismatch repair. May act as a 'molecular matchmaker', a protein that promotes the formation of a stable complex between two or more DNA-binding proteins in an ATP-dependent manner without itself being part of a final effector complex. In Shewanella pealeana (strain ATCC 700345 / ANG-SQ1), this protein is DNA mismatch repair protein MutL.